A 551-amino-acid chain; its full sequence is Membrane protein insertase YidC (551 aa).

The helical transmembrane segment at 3–23 (ANHIRILLLVTIAIMLISLMG) threads the bilayer. The span at 30–43 (PSNSSQSQTTQTQQ) shows a compositional bias: low complexity. The disordered stretch occupies residues 30–61 (PSNSSQSQTTQTQQDNSHYNSDTPATTNVSTS). Positions 44–61 (DNSHYNSDTPATTNVSTS) are enriched in polar residues. Transmembrane regions (helical) follow at residues 361–381 (LVGN…LIFY), 431–451 (LSGC…YWVL), and 504–524 (IMMF…SGLV).

The protein belongs to the OXA1/ALB3/YidC family. Type 1 subfamily. Interacts with the Sec translocase complex via SecD. Specifically interacts with transmembrane segments of nascent integral membrane proteins during membrane integration.

It localises to the cell inner membrane. In terms of biological role, required for the insertion and/or proper folding and/or complex formation of integral membrane proteins into the membrane. Involved in integration of membrane proteins that insert both dependently and independently of the Sec translocase complex, as well as at least some lipoproteins. Aids folding of multispanning membrane proteins. This chain is Membrane protein insertase YidC, found in Francisella philomiragia subsp. philomiragia (strain ATCC 25017 / CCUG 19701 / FSC 153 / O#319-036).